A 211-amino-acid polypeptide reads, in one-letter code: ATP phosphoribosyltransferase (211 aa).

The protein belongs to the ATP phosphoribosyltransferase family. Short subfamily. As to quaternary structure, heteromultimer composed of HisG and HisZ subunits.

It is found in the cytoplasm. It catalyses the reaction 1-(5-phospho-beta-D-ribosyl)-ATP + diphosphate = 5-phospho-alpha-D-ribose 1-diphosphate + ATP. It participates in amino-acid biosynthesis; L-histidine biosynthesis; L-histidine from 5-phospho-alpha-D-ribose 1-diphosphate: step 1/9. Functionally, catalyzes the condensation of ATP and 5-phosphoribose 1-diphosphate to form N'-(5'-phosphoribosyl)-ATP (PR-ATP). Has a crucial role in the pathway because the rate of histidine biosynthesis seems to be controlled primarily by regulation of HisG enzymatic activity. This chain is ATP phosphoribosyltransferase, found in Pseudomonas putida (strain W619).